Consider the following 364-residue polypeptide: Phenylalanine dehydrogenase (364 aa).

Arg62 contacts NAD(+). Lys86 is a binding site for L-phenylalanine. Lys98 functions as the Proton donor/acceptor in the catalytic mechanism. Residues Asp133, Ser164, Thr168, 255–256 (AM), and 276–278 (AAN) each bind NAD(+). An L-phenylalanine-binding site is contributed by Asn278.

It belongs to the Glu/Leu/Phe/Val dehydrogenases family.

The catalysed reaction is L-phenylalanine + NAD(+) + H2O = 3-phenylpyruvate + NH4(+) + NADH + H(+). It participates in amino-acid biosynthesis; L-phenylalanine biosynthesis; L-phenylalanine from phenylpyruvate (PDH route): step 1/1. Its function is as follows. Catalyzes the reversible NAD(+)-dependent oxidative deamination of L-phenylalanine to phenylpyruvate. The protein is Phenylalanine dehydrogenase of Rhodococcus jostii (strain RHA1).